A 403-amino-acid polypeptide reads, in one-letter code: S-adenosylmethionine synthase (403 aa).

Residue histidine 17 coordinates ATP. Aspartate 19 is a Mg(2+) binding site. Residue glutamate 45 coordinates K(+). L-methionine is bound by residues glutamate 58 and glutamine 104. Positions 104 to 114 are flexible loop; it reads QSPDIAQGVDT. ATP contacts are provided by residues 179-181, 250-251, aspartate 259, 265-266, alanine 282, and lysine 286; these read DGK, KF, and RK. Residue aspartate 259 coordinates L-methionine. Position 290 (lysine 290) interacts with L-methionine.

The protein belongs to the AdoMet synthase family. Homotetramer; dimer of dimers. It depends on Mg(2+) as a cofactor. K(+) serves as cofactor.

Its subcellular location is the cytoplasm. It catalyses the reaction L-methionine + ATP + H2O = S-adenosyl-L-methionine + phosphate + diphosphate. Its pathway is amino-acid biosynthesis; S-adenosyl-L-methionine biosynthesis; S-adenosyl-L-methionine from L-methionine: step 1/1. Catalyzes the formation of S-adenosylmethionine (AdoMet) from methionine and ATP. The overall synthetic reaction is composed of two sequential steps, AdoMet formation and the subsequent tripolyphosphate hydrolysis which occurs prior to release of AdoMet from the enzyme. The polypeptide is S-adenosylmethionine synthase (Mycobacterium ulcerans (strain Agy99)).